Here is a 442-residue protein sequence, read N- to C-terminus: MHDIKSIRDNPQGFDAALTRRGLSPQSSHLLAIDERRRAAILASEQAQARRNAASKEIGEAKKAKDDARASALMEEVAKLKTTMPELEAAAKQADEELARELSAIPNLPLDEVPDGKDEHDNVERHVFGARRNYAFAPRPHDEIGAALGMDFESAAKLSGARFVVLKKGLARLERAIGQFMLDLHTTEHGYTEINPPLLVRNDVMFGTGQLPKFEDDQFWAVRGELLIAPDERLKTERLGLIPTAEVALTNLVRESIVDEKELPMRLTALTPCFRAEAGAAGRDTRGMIRQHQFTKVELVSITTPETSKDEHERMLACAEEVLRRLDLHYRVITLCTGDMGFSSQKTYDIEVWMPGQGDGGAFREISSCSVCGDFQARRMDARYRASDGKPRFVHTLNGSGTAVGRALIAVMETYQQADGSIAVPDVLQPYMGGLKVVAAEP.

An L-serine-binding site is contributed by 244–246; that stretch reads TAE. Residue 275–277 participates in ATP binding; it reads RAE. Glu-298 lines the L-serine pocket. 365 to 368 contacts ATP; the sequence is EISS. L-serine is bound at residue Ser-400.

This sequence belongs to the class-II aminoacyl-tRNA synthetase family. Type-1 seryl-tRNA synthetase subfamily. In terms of assembly, homodimer. The tRNA molecule binds across the dimer.

It localises to the cytoplasm. The catalysed reaction is tRNA(Ser) + L-serine + ATP = L-seryl-tRNA(Ser) + AMP + diphosphate + H(+). It carries out the reaction tRNA(Sec) + L-serine + ATP = L-seryl-tRNA(Sec) + AMP + diphosphate + H(+). It participates in aminoacyl-tRNA biosynthesis; selenocysteinyl-tRNA(Sec) biosynthesis; L-seryl-tRNA(Sec) from L-serine and tRNA(Sec): step 1/1. Its function is as follows. Catalyzes the attachment of serine to tRNA(Ser). Is also able to aminoacylate tRNA(Sec) with serine, to form the misacylated tRNA L-seryl-tRNA(Sec), which will be further converted into selenocysteinyl-tRNA(Sec). The sequence is that of Serine--tRNA ligase from Bradyrhizobium sp. (strain BTAi1 / ATCC BAA-1182).